A 649-amino-acid chain; its full sequence is Probable ADP-ribosylation factor GTPase-activating protein AGD14 (649 aa).

The Arf-GAP domain maps to 12-130; that stretch reads EKIIRGLMKL…KYAGANDADK (119 aa). A C4-type zinc finger spans residues 27-50; it reads CINCNSLGPQYVCTTFWTFVCMAC. Disordered regions lie at residues 124–159, 209–279, 294–316, and 366–391; these read GAND…QSPP, FSNE…VRSV, LGEA…SNHV, and FTPA…SAPK. Basic and acidic residues predominate over residues 127–146; that stretch reads DADKPSKDSQDHVSSEDMTR. Positions 150-159 are enriched in low complexity; the sequence is SYHSYSQSPP. Composition is skewed to polar residues over residues 248 to 257, 269 to 279, 300 to 315, and 366 to 385; these read PQFQHSNAPP, RTTSSGSVRSV, ESRQ…TSNH, and FTPA…SRPS.

GTPase-activating protein (GAP) for ADP ribosylation factor (ARF). The polypeptide is Probable ADP-ribosylation factor GTPase-activating protein AGD14 (AGD14) (Arabidopsis thaliana (Mouse-ear cress)).